The following is a 205-amino-acid chain: N-(5'-phosphoribosyl)anthranilate isomerase (205 aa).

The protein belongs to the TrpF family.

The catalysed reaction is N-(5-phospho-beta-D-ribosyl)anthranilate = 1-(2-carboxyphenylamino)-1-deoxy-D-ribulose 5-phosphate. The protein operates within amino-acid biosynthesis; L-tryptophan biosynthesis; L-tryptophan from chorismate: step 3/5. This chain is N-(5'-phosphoribosyl)anthranilate isomerase, found in Clostridium acetobutylicum (strain ATCC 824 / DSM 792 / JCM 1419 / IAM 19013 / LMG 5710 / NBRC 13948 / NRRL B-527 / VKM B-1787 / 2291 / W).